Here is an 85-residue protein sequence, read N- to C-terminus: Progonadoliberin-2 (85 aa).

Positions 1-23 (MCVSRLVLLFGLLLCVGAQLSNA) are cleaved as a signal peptide. At Gln-24 the chain carries Pyrrolidone carboxylic acid. The residue at position 33 (Gly-33) is a Glycine amide.

The protein belongs to the GnRH family.

The protein localises to the secreted. Stimulates the secretion of gonadotropins. The polypeptide is Progonadoliberin-2 (gnrh2) (Morone saxatilis (Striped bass)).